A 209-amino-acid chain; its full sequence is Large ribosomal subunit protein uL3 (209 aa).

The tract at residues 133-152 is disordered; the sequence is THGNSLSHRVPGSIGQNQTP. The residue at position 150 (glutamine 150) is an N5-methylglutamine.

Belongs to the universal ribosomal protein uL3 family. As to quaternary structure, part of the 50S ribosomal subunit. Forms a cluster with proteins L14 and L19. In terms of processing, methylated by PrmB.

In terms of biological role, one of the primary rRNA binding proteins, it binds directly near the 3'-end of the 23S rRNA, where it nucleates assembly of the 50S subunit. This Yersinia enterocolitica serotype O:8 / biotype 1B (strain NCTC 13174 / 8081) protein is Large ribosomal subunit protein uL3.